The chain runs to 444 residues: Homogentisate 1,2-dioxygenase (444 aa).

The Proton acceptor role is filled by H298. H341 and E347 together coordinate Fe cation. The homogentisate site is built by Y356 and H377. Residue H377 participates in Fe cation binding.

It belongs to the homogentisate dioxygenase family. In terms of assembly, hexamer; dimer of trimers. Fe cation is required as a cofactor.

It carries out the reaction homogentisate + O2 = 4-maleylacetoacetate + H(+). It participates in amino-acid degradation; L-phenylalanine degradation; acetoacetate and fumarate from L-phenylalanine: step 4/6. In terms of biological role, involved in the catabolism of homogentisate (2,5-dihydroxyphenylacetate or 2,5-OH-PhAc), a central intermediate in the degradation of phenylalanine and tyrosine. Catalyzes the oxidative ring cleavage of the aromatic ring of homogentisate to yield maleylacetoacetate. This is Homogentisate 1,2-dioxygenase from Burkholderia lata (strain ATCC 17760 / DSM 23089 / LMG 22485 / NCIMB 9086 / R18194 / 383).